Here is a 600-residue protein sequence, read N- to C-terminus: UvrABC system protein C (600 aa).

Residues 15–92 enclose the GIY-YIG domain; that stretch reads EKPGCYLMKD…IKKYQPYYNV (78 aa). In terms of domain architecture, UVR spans 197–232; the sequence is GAVKQDLTQKMEQASEQLEFERAAEIRDQLKYIEET.

The protein belongs to the UvrC family. Interacts with UvrB in an incision complex.

It localises to the cytoplasm. In terms of biological role, the UvrABC repair system catalyzes the recognition and processing of DNA lesions. UvrC both incises the 5' and 3' sides of the lesion. The N-terminal half is responsible for the 3' incision and the C-terminal half is responsible for the 5' incision. This Lactobacillus helveticus (strain DPC 4571) protein is UvrABC system protein C.